Here is a 556-residue protein sequence, read N- to C-terminus: Arginine--tRNA ligase (556 aa).

Positions 132–142 match the 'HIGH' region motif; sequence ANPTGPIHLGG.

It belongs to the class-I aminoacyl-tRNA synthetase family. As to quaternary structure, monomer.

Its subcellular location is the cytoplasm. The catalysed reaction is tRNA(Arg) + L-arginine + ATP = L-arginyl-tRNA(Arg) + AMP + diphosphate. This is Arginine--tRNA ligase from Kocuria rhizophila (strain ATCC 9341 / DSM 348 / NBRC 103217 / DC2201).